Consider the following 449-residue polypeptide: Early 53 kDa protein (449 aa).

The tract at residues 1–68 (MNRFFRENNI…CTSPAKPLEH (68 aa)) is disordered. Positions 31 to 42 (NSPPSPVRPPPK) are enriched in pro residues. The C4-type zinc-finger motif lies at 379-399 (CKLCKKTKLYYKNPVLYCTKC).

The protein localises to the virion. Its subcellular location is the host cytoplasm. It localises to the host nucleus. The protein resides in the host cell membrane. In terms of biological role, may act as a packaging protein or as a structural component associated with intranuclear baculovirus virion assembly. The chain is Early 53 kDa protein (ME53) from Autographa californica nuclear polyhedrosis virus (AcMNPV).